Reading from the N-terminus, the 496-residue chain is Pseudooxynicotine dehydrogenase (496 aa).

The segment at residues 1–42 (MTKDGDEGSKSGVSRRKFLGSAAVGVATAGIASQLLTLSAPA) is a signal peptide (tat-type signal). FAD contacts are provided by alanine 69, glutamate 88, arginine 96, tryptophan 113, valine 285, serine 461, and isoleucine 471.

The protein belongs to the flavin monoamine oxidase family. In terms of assembly, homodimer. FAD is required as a cofactor. Predicted to be exported by the Tat system. The position of the signal peptide cleavage has not been experimentally proven.

It localises to the periplasm. The catalysed reaction is pseudooxynicotine + 2 Fe(III)-[cytochrome c] + H2O = 4-oxo-4-(pyridin-3-yl)butanal + methylamine + 2 Fe(II)-[cytochrome c] + 2 H(+). The protein operates within alkaloid degradation; nicotine degradation. With respect to regulation, strongly inhibited by Na(2)MoO(4) and FeCl(3). Activity is nearly twice as high in the presence of Na(2)WO(4). Involved in nicotine degradation. Catalyzes the deamination of pseudooxynicotine to 3-succinoylsemialdehyde-pyridine. Functions as a dehydrogenase that uses the c-type cytochrome protein CycN as the physiological electron acceptor. O(2) is a poor electron acceptor. Pnao is oxidized by CycN 230 times faster than O(2) at equivalent oxidant concentrations. This chain is Pseudooxynicotine dehydrogenase, found in Pseudomonas putida (strain DSM 28022 / S16).